Here is a 385-residue protein sequence, read N- to C-terminus: Calcium/calmodulin-dependent protein kinase type 1D (385 aa).

Residues 23 to 279 enclose the Protein kinase domain; sequence FEFKETLGTG…CEQAARHPWI (257 aa). ATP is bound by residues 29-37 and K52; that span reads LGTGAFSEV. K113 is covalently cross-linked (Glycyl lysine isopeptide (Lys-Gly) (interchain with G-Cter in SUMO2)). S122 carries the phosphoserine modification. Residue D144 is the Proton acceptor of the active site. T180 is modified (phosphothreonine; by CaMKK1 and CaMKK2). The segment at 279–319 is autoinhibitory domain; that stretch reads IAGDTALSKNIHESVSAQIRKNFAKSKWRQAFNATAVVRHM. Residues 299–320 are calmodulin-binding; sequence KNFAKSKWRQAFNATAVVRHMR. A Nuclear export signal motif is present at residues 318 to 324; that stretch reads HMRRLQL. The disordered stretch occupies residues 363–385; that stretch reads VAGVGAERRPRPTTVTTGHTGSK. Over residues 375-385 the composition is skewed to polar residues; that stretch reads TTVTTGHTGSK.

The protein belongs to the protein kinase superfamily. CAMK Ser/Thr protein kinase family. CaMK subfamily. In terms of tissue distribution, expressed ubiquitously with high levels in brain and low levels in kidney. Isoform 2 is highly expressed in brain compared to other tissues. In hematopoietic cell lines predominant expression was detected in T and EC cells.

The protein localises to the cytoplasm. The protein resides in the nucleus. The catalysed reaction is L-seryl-[protein] + ATP = O-phospho-L-seryl-[protein] + ADP + H(+). The enzyme catalyses L-threonyl-[protein] + ATP = O-phospho-L-threonyl-[protein] + ADP + H(+). Its activity is regulated as follows. Activated by Ca(2+)/calmodulin. Binding of calmodulin results in conformational change that relieves intrasteric autoinhibition and allows phosphorylation of Thr-180 within the activation loop by CaMKK1 or CaMKK2. Phosphorylation of Thr-180 results in several fold increase in total activity. Unlike CaMK4, may be unable to exhibit autonomous activity after Ca(2+)/calmodulin activation. In terms of biological role, calcium/calmodulin-dependent protein kinase that operates in the calcium-triggered CaMKK-CaMK1 signaling cascade and, upon calcium influx, activates CREB-dependent gene transcription, regulates calcium-mediated granulocyte function and respiratory burst and promotes basal dendritic growth of hippocampal neurons. In neutrophil cells, required for cytokine-induced proliferative responses and activation of the respiratory burst. Activates the transcription factor CREB1 in hippocampal neuron nuclei. May play a role in apoptosis of erythroleukemia cells. In vitro, phosphorylates transcription factor CREM isoform Beta. Isoform 1 but not isoform 2 activates CREB1. The sequence is that of Calcium/calmodulin-dependent protein kinase type 1D (Camk1d) from Mus musculus (Mouse).